The following is a 418-amino-acid chain: Light-independent protochlorophyllide reductase subunit N (418 aa).

Residues Cys-17, Cys-42, and Cys-103 each coordinate [4Fe-4S] cluster.

The protein belongs to the BchN/ChlN family. As to quaternary structure, protochlorophyllide reductase is composed of three subunits; ChlL, ChlN and ChlB. Forms a heterotetramer of two ChlB and two ChlN subunits. [4Fe-4S] cluster is required as a cofactor.

The enzyme catalyses chlorophyllide a + oxidized 2[4Fe-4S]-[ferredoxin] + 2 ADP + 2 phosphate = protochlorophyllide a + reduced 2[4Fe-4S]-[ferredoxin] + 2 ATP + 2 H2O. The protein operates within porphyrin-containing compound metabolism; chlorophyll biosynthesis (light-independent). Component of the dark-operative protochlorophyllide reductase (DPOR) that uses Mg-ATP and reduced ferredoxin to reduce ring D of protochlorophyllide (Pchlide) to form chlorophyllide a (Chlide). This reaction is light-independent. The NB-protein (ChlN-ChlB) is the catalytic component of the complex. The chain is Light-independent protochlorophyllide reductase subunit N from Prochlorococcus marinus (strain MIT 9211).